A 616-amino-acid chain; its full sequence is Chaperone protein HscA (616 aa).

The protein belongs to the heat shock protein 70 family.

Its function is as follows. Chaperone involved in the maturation of iron-sulfur cluster-containing proteins. Has a low intrinsic ATPase activity which is markedly stimulated by HscB. Involved in the maturation of IscU. The chain is Chaperone protein HscA from Serratia proteamaculans (strain 568).